Consider the following 833-residue polypeptide: MPTHSRSRDRYGGRDSDREARYDYDYARRRYATDDDDDYDDDELEHDLTERRYRRDGYRPPRESRARGYYERDAEGAADEELLGNERDPGPRASRSYGDDYDARRREHSRAREAPRRSERHRDRDREGRSRRRAYEDDGRHRTRDGRRDRGRESDGEARRSRRREAGRETAARKHRSSDSTNSASHLLSADALAKLGAQYEKEERRKREIAKDAAKAERKRQKKLAVVGEETRALRDPPGESHRDRTKARVASGAYLEEGRSPEMRVRHRGGGGPAMEARWRKEGSWGGTMDDSGGGRPFWKRKRWIGLGALIIILVIVIPVAVVVSKKHDNKSDPADSQGTSPGKSNLDGLSHDSIPAYAQGTYLDPWTWYDTTDFNVTFTNETVGGLSIMGLNSTWDDSARPNDNVPPLNEPFPYGSQPIRGVNLGGWLSIEPFIVPSLFDSYSSVSGIIDEWTLSKRLGSSAASTLEKHYATFITEQDFADIRDAGLDHVRIQYSYWAVATYDDDPYVAKISWRYLLRAIEYCRKYGLRVNLDPHGIPGSQNGWNHSGREGVIGWLNGTDGELNRNRSLAVHDSVSKFFAQDRYKNIVTIYGLVNEPLMLSLSIEDVLDWTTEATKLVQKNGITAYVALHDGFLNLSKWKSMLKNRPDKMLLDTHQYTIFNTGQIGLNHTAKVNLICNDWYNMIKEINSTSTGWGPTICGEWSQADTDCAKYLNNVGRGTRWEGTFSLTDSTQYCPTADTGPPCSCANANADVSKYSADYKKFLQTYAEAQMSAFETGQGWFYWTWRTESAAQWSYRTAWKNGFMPAKAYAPSFRCGDAVPDFGDLPEYY.

Residues 1–33 show a composition bias toward basic and acidic residues; sequence MPTHSRSRDRYGGRDSDREARYDYDYARRRYAT. The disordered stretch occupies residues 1-228; the sequence is MPTHSRSRDR…RKRQKKLAVV (228 aa). The Cytoplasmic segment spans residues 1 to 305; the sequence is MPTHSRSRDR…GGRPFWKRKR (305 aa). The span at 34–45 shows a compositional bias: acidic residues; it reads DDDDDYDDDELE. Basic and acidic residues-rich tracts occupy residues 46 to 75 and 97 to 172; these read HDLTERRYRRDGYRPPRESRARGYYERDAE and YGDD…ETAA. Residues 183-196 are compositionally biased toward low complexity; it reads SASHLLSADALAKL. Basic and acidic residues predominate over residues 200–217; sequence YEKEERRKREIAKDAAKA. The chain crosses the membrane as a helical; Signal-anchor for type II membrane protein span at residues 306-326; the sequence is WIGLGALIIILVIVIPVAVVV. Topologically, residues 327–833 are extracellular; sequence SKKHDNKSDP…PDFGDLPEYY (507 aa). The tract at residues 331 to 353 is disordered; the sequence is DNKSDPADSQGTSPGKSNLDGLS. N332 carries N-linked (GlcNAc...) asparagine glycosylation. Residues 337 to 346 show a composition bias toward polar residues; it reads ADSQGTSPGK. N378, N383, N395, N548, N560, and N569 each carry an N-linked (GlcNAc...) asparagine glycan. E599 serves as the catalytic Proton donor. N-linked (GlcNAc...) asparagine glycans are attached at residues N638, N671, and N691. E704 functions as the Nucleophile in the catalytic mechanism.

This sequence belongs to the glycosyl hydrolase 5 (cellulase A) family.

The protein resides in the cell membrane. It carries out the reaction Successive hydrolysis of beta-D-glucose units from the non-reducing ends of (1-&gt;3)-beta-D-glucans, releasing alpha-glucose.. Glucosidase involved in the degradation of cellulosic biomass. Active on lichenan. The sequence is that of Probable glucan 1,3-beta-glucosidase D (exgD) from Aspergillus fumigatus (strain CBS 144.89 / FGSC A1163 / CEA10) (Neosartorya fumigata).